Consider the following 557-residue polypeptide: ABC1 family protein MCP2 homolog (557 aa).

Residues 1-33 (MFSRFSWPRITRCFRSYPKKKSSCISFTHHARE) constitute a mitochondrion transit peptide. Residues 34–39 (HTNFKK) lie on the Mitochondrial matrix side of the membrane. A helical membrane pass occupies residues 40 to 56 (PAVVGASITLMASVALV). At 57–557 (DFDPVKHAGV…NYFYYKHMYL (501 aa)) the chain is on the mitochondrial intermembrane side.

This sequence belongs to the protein kinase superfamily. ADCK protein kinase family.

It localises to the mitochondrion inner membrane. Its function is as follows. Involved in mitochondrial lipid homeostasis. This chain is ABC1 family protein MCP2 homolog, found in Schizosaccharomyces pombe (strain 972 / ATCC 24843) (Fission yeast).